The sequence spans 133 residues: Binder of sperm protein homolog 1 (133 aa).

The N-terminal stretch at 1–20 (MAQPLDFLLVSICLFHSLFS) is a signal peptide. Fibronectin type-II domains follow at residues 40-84 (TEDG…YCAL) and 85-133 (SDYA…YCIE). 4 disulfides stabilise this stretch: C45–C69, C59–C82, C90–C116, and C104–C131. N72 carries an N-linked (GlcNAc...) asparagine glycan.

Belongs to the seminal plasma protein family. As to expression, expressed only in the epididymis.

The protein resides in the secreted. In terms of biological role, binds sperm in vitro and promotes sperm capacitation. Specifically promotes capacitation induced by high density lipoproteins (HDLs). Also binds heparin, phospholipid liposomes, and weakly to gelatin. Does not bind chondroitin sulfate B. The sequence is that of Binder of sperm protein homolog 1 (Bsph1) from Mus musculus (Mouse).